We begin with the raw amino-acid sequence, 61 residues long: U-poneritoxin(01)-Om5a (61 aa).

The first 23 residues, 1–23 (MKLSALSLAFAIILMMTIMYTKA), serve as a signal peptide directing secretion. Residues 24–41 (DADASADAEADADAEAEA) constitute a propeptide that is removed on maturation. Position 59 is a glutamine amide (Q59).

It belongs to the formicidae venom precursor-01 superfamily. In terms of processing, truncated sequences of this peptide have also been found in the venom. It is possible they have been cleaved in the venom. In terms of tissue distribution, expressed by the venom gland.

Its subcellular location is the secreted. Functionally, acidic peptide with potent hemolytic activities (94.8% at 50 uM). It also shows low antimicrobial activities against E.coli (MIC=50uM), as well as histamine-releasing activity (28.3% at 10 uM). Does not have activity against S.aureus, and S.cerevisiae. This chain is U-poneritoxin(01)-Om5a, found in Odontomachus monticola (Trap-jaw ant).